A 597-amino-acid chain; its full sequence is C4b-binding protein alpha chain (597 aa).

The signal sequence occupies residues 1-48 (MHPPKTPSGALHRKRKMAAWPFSRLWKVSDPILFQMTLIAALLPAVLG). 8 consecutive Sushi domains span residues 49-110 (NCGP…FCIY), 111-172 (KRCR…QCEI), 173-236 (VKCK…TCEK), 237-296 (ITCR…ACEP), 297-362 (NSCI…GCEA), 363-424 (LCCP…SCGD), 425-482 (ICNF…QCKA), and 483-540 (LCRK…KCEW). 16 cysteine pairs are disulfide-bonded: cysteine 50–cysteine 96, cysteine 81–cysteine 108, cysteine 113–cysteine 154, cysteine 140–cysteine 170, cysteine 175–cysteine 217, cysteine 203–cysteine 234, cysteine 239–cysteine 281, cysteine 267–cysteine 294, cysteine 299–cysteine 348, cysteine 332–cysteine 360, cysteine 365–cysteine 409, cysteine 399–cysteine 422, cysteine 426–cysteine 468, cysteine 454–cysteine 480, cysteine 484–cysteine 525, and cysteine 511–cysteine 538. N-linked (GlcNAc...) asparagine glycosylation is present at asparagine 221. Residues asparagine 506 and asparagine 528 are each glycosylated (N-linked (GlcNAc...) asparagine).

In terms of assembly, disulfide-linked complex of alpha and beta chains of 3 possible sorts: a 570 kDa complex of 7 alpha chains and 1 beta chain, a 530 kDa homoheptamer of alpha chains or a 500 kDa complex of 6 alpha chains and 1 beta chain. The central body of the alpha chain homomer supports tentacles, each with the binding site for C4b at the end. (Microbial infection) Interacts with Staphylococcus aureus protein SdrE; this interaction inhibits complement-mediated bacterial opsonization. In terms of tissue distribution, chylomicrons in the plasma.

The protein localises to the secreted. Its function is as follows. Controls the classical pathway of complement activation. It binds as a cofactor to C3b/C4b inactivator (C3bINA), which then hydrolyzes the complement fragment C4b. It also accelerates the degradation of the C4bC2a complex (C3 convertase) by dissociating the complement fragment C2a. Alpha chain binds C4b. It also interacts with anticoagulant protein S and with serum amyloid P component. The protein is C4b-binding protein alpha chain (C4BPA) of Homo sapiens (Human).